Here is a 446-residue protein sequence, read N- to C-terminus: tRNA(Ile2) 2-agmatinylcytidine synthetase TiaS (446 aa).

Belongs to the TiaS family.

It localises to the cytoplasm. The enzyme catalyses cytidine(34) in tRNA(Ile2) + agmatine + ATP + H2O = 2-agmatinylcytidine(34) in tRNA(Ile2) + AMP + 2 phosphate + 2 H(+). Its function is as follows. ATP-dependent agmatine transferase that catalyzes the formation of 2-agmatinylcytidine (agm2C) at the wobble position (C34) of tRNA(Ile2), converting the codon specificity from AUG to AUA. In Cenarchaeum symbiosum (strain A), this protein is tRNA(Ile2) 2-agmatinylcytidine synthetase TiaS.